A 316-amino-acid chain; its full sequence is Olfactory receptor 10H28 (316 aa).

The Extracellular segment spans residues 1–26; that stretch reads MPGQNYSTISEFILFGFSAFPHQMLP. A glycan (N-linked (GlcNAc...) asparagine) is linked at Asn-5. A helical transmembrane segment spans residues 27 to 47; it reads ALFLLYLLMYLFTLLGNLVIM. Residues 48–57 lie on the Cytoplasmic side of the membrane; it reads AAIWTEHRLH. Residues 58–78 form a helical membrane-spanning segment; that stretch reads TPMYLFLCALSISEILFTVVI. At 79 to 100 the chain is on the extracellular side; sequence TPRMLSDMLSTHRSITFIACAN. Cys-98 and Cys-190 are oxidised to a cystine. The chain crosses the membrane as a helical span at residues 101-121; it reads QLFFSFTFGYTHSFLLVVMGY. Over 122 to 144 the chain is Cytoplasmic; it reads DRYVAICRPLHYHALMSLQGCAR. Residues 145-165 form a helical membrane-spanning segment; that stretch reads LVAWSWAGGSLIGMALTIIIF. At 166–207 the chain is on the extracellular side; it reads HLTFCESNVIHHILCHVFSLLKLACGERTAFVTIAVILVCVT. The chain crosses the membrane as a helical span at residues 208–228; it reads PLIGCLVFIILSYIFIVAAIL. The Cytoplasmic segment spans residues 229-241; the sequence is RIPSTEGRHKTFS. The chain crosses the membrane as a helical span at residues 242–262; it reads TCASHLTVVIVHYGFASIIYL. Residues 263-273 lie on the Extracellular side of the membrane; sequence KSRGLYSQYTD. A helical membrane pass occupies residues 274–294; that stretch reads TLMSTTYTVFTPFLSPIIFSL. Residues 295–316 are Cytoplasmic-facing; the sequence is RNKELKNAIIKSFHRNVCQQSI.

This sequence belongs to the G-protein coupled receptor 1 family.

It is found in the cell membrane. Its function is as follows. Odorant receptor. The chain is Olfactory receptor 10H28 from Mus musculus (Mouse).